The primary structure comprises 1055 residues: Protein SUPPRESSOR OF QUENCHING 1, chloroplastic (1055 aa).

The N-terminal 56 residues, 1–56 (MALKLTSPPSVFSQSRRLSSSSLIPIRSKSTFTGFRSRTGVYLSKTTALQSSTKLS), are a transit peptide targeting the chloroplast. Val-57 carries the post-translational modification N-acetylvaline. The Stromal portion of the chain corresponds to 59–327 (AESPAATIAT…FQGSRRDILR (269 aa)). Asp-80 serves as the catalytic Nucleophile. The Mg(2+) site is built by Asp-80 and Asp-82. Substrate is bound at residue Asp-80. The active-site Proton donor is Asp-82. Substrate is bound by residues Glu-89, 118 to 122 (TGEAK), 141 to 144 (AKER), and 183 to 189 (SSADRIK). Residue Asp-242 coordinates Mg(2+). The chain crosses the membrane as a helical span at residues 328-345 (YGSLGIALSCVYFAATNW). At 346 to 1055 (KAMQYASPKA…AGGLQLQGTR (710 aa)) the chain is on the lumenal side. The Thioredoxin domain maps to 359–536 (ALVGAKSPSF…LDDVVAAALT (178 aa)). A disulfide bond links Cys-431 and Cys-434. 5 NHL repeats span residues 565 to 597 (PLKF…TDLE), 611 to 647 (GFQD…NHAL), 673 to 712 (GRKG…YSVL), 802 to 832 (LQHP…LDPV), and 854 to 887 (GAQL…IDLN).

The protein in the N-terminal section; belongs to the HAD-like hydrolase superfamily. It in the C-terminal section; belongs to the thioredoxin family. The cofactor is Mg(2+).

The protein resides in the plastid. Its subcellular location is the chloroplast thylakoid membrane. Its function is as follows. Required to maintain light harvesting efficiency, especially during nonphotochemical quenching (NPQ) recovery, via the regulation of chlorophyll excited-state lifetime probably by preventing the formation of a slowly reversible form of antenna quenching. This Arabidopsis thaliana (Mouse-ear cress) protein is Protein SUPPRESSOR OF QUENCHING 1, chloroplastic.